A 298-amino-acid chain; its full sequence is Lipoyl synthase 1 (298 aa).

Residues Cys34, Cys39, Cys45, Cys60, Cys64, Cys67, and Ser274 each contribute to the [4Fe-4S] cluster site. One can recognise a Radical SAM core domain in the interval 46 to 263 (FYQGTATFLM…RRLGESMGFL (218 aa)).

Belongs to the radical SAM superfamily. Lipoyl synthase family. [4Fe-4S] cluster serves as cofactor.

Its subcellular location is the cytoplasm. It carries out the reaction [[Fe-S] cluster scaffold protein carrying a second [4Fe-4S](2+) cluster] + N(6)-octanoyl-L-lysyl-[protein] + 2 oxidized [2Fe-2S]-[ferredoxin] + 2 S-adenosyl-L-methionine + 4 H(+) = [[Fe-S] cluster scaffold protein] + N(6)-[(R)-dihydrolipoyl]-L-lysyl-[protein] + 4 Fe(3+) + 2 hydrogen sulfide + 2 5'-deoxyadenosine + 2 L-methionine + 2 reduced [2Fe-2S]-[ferredoxin]. It functions in the pathway protein modification; protein lipoylation via endogenous pathway; protein N(6)-(lipoyl)lysine from octanoyl-[acyl-carrier-protein]: step 2/2. Catalyzes the radical-mediated insertion of two sulfur atoms into the C-6 and C-8 positions of the octanoyl moiety bound to the lipoyl domains of lipoate-dependent enzymes, thereby converting the octanoylated domains into lipoylated derivatives. The sequence is that of Lipoyl synthase 1 from Thermosynechococcus vestitus (strain NIES-2133 / IAM M-273 / BP-1).